A 100-amino-acid polypeptide reads, in one-letter code: Large ribosomal subunit protein uL23 (100 aa).

It belongs to the universal ribosomal protein uL23 family. In terms of assembly, part of the 50S ribosomal subunit. Contacts protein L29, and trigger factor when it is bound to the ribosome.

Functionally, one of the early assembly proteins it binds 23S rRNA. One of the proteins that surrounds the polypeptide exit tunnel on the outside of the ribosome. Forms the main docking site for trigger factor binding to the ribosome. The sequence is that of Large ribosomal subunit protein uL23 from Idiomarina loihiensis (strain ATCC BAA-735 / DSM 15497 / L2-TR).